The following is a 168-amino-acid chain: Ribosome maturation factor RimM (168 aa).

The 76-residue stretch at 93–168 (EDEFYQSDLV…IVLNIPEFID (76 aa)) folds into the PRC barrel domain.

This sequence belongs to the RimM family. As to quaternary structure, binds ribosomal protein uS19.

It localises to the cytoplasm. Its function is as follows. An accessory protein needed during the final step in the assembly of 30S ribosomal subunit, possibly for assembly of the head region. Essential for efficient processing of 16S rRNA. May be needed both before and after RbfA during the maturation of 16S rRNA. It has affinity for free ribosomal 30S subunits but not for 70S ribosomes. This Wolbachia pipientis wMel protein is Ribosome maturation factor RimM.